Reading from the N-terminus, the 1185-residue chain is Pyruvate carboxylase (1185 aa).

Positions 32 to 484 (KFTKVLVANR…WTTFIDDTPE (453 aa)) constitute a Biotin carboxylation domain. ATP-binding residues include Lys-150, Glu-234, and His-269. The ATP-grasp domain maps to 154 to 351 (RAIAIRCGVP…IVSAQLHVAA (198 aa)). Arg-326 is a catalytic residue. The Pyruvate carboxyltransferase domain maps to 570–838 (GLIMDTTWRD…QLEFDNNQLR (269 aa)). Substrate-binding positions include 578–582 (RDAHQ) and Arg-651. Asp-579 contributes to the a divalent metal cation binding site. A divalent metal cation contacts are provided by Lys-747, His-777, and His-779. Residue Lys-747 is modified to N6-carboxylysine. Substrate is bound at residue Thr-912. The Biotinyl-binding domain maps to 1108–1183 (RADPGNPGHV…NGGDLCAVLE (76 aa)). Lys-1149 carries the N6-biotinyllysine modification.

Requires biotin as cofactor. Zn(2+) is required as a cofactor.

It localises to the cytoplasm. It carries out the reaction hydrogencarbonate + pyruvate + ATP = oxaloacetate + ADP + phosphate + H(+). Its pathway is carbohydrate biosynthesis; gluconeogenesis. In terms of biological role, pyruvate carboxylase catalyzes a 2-step reaction, involving the ATP-dependent carboxylation of the covalently attached biotin in the first step and the transfer of the carboxyl group to pyruvate in the second. This chain is Pyruvate carboxylase (pyr1), found in Schizosaccharomyces pombe (strain 972 / ATCC 24843) (Fission yeast).